The chain runs to 360 residues: Photosystem II protein D1 (360 aa).

The next 3 membrane-spanning stretches (helical) occupy residues 29 to 46 (YIGWFGVLMFPLLLTATT), 118 to 133 (HFLLGVACYMGREWEL), and 142 to 156 (WIAVAYSAPVAAATA). His-118 contacts chlorophyll a. Tyr-126 is a pheophytin a binding site. Residues Asp-170 and Glu-189 each contribute to the [CaMn4O5] cluster site. Residues 197-218 (FHMMGVAGVFGGSLFSAMHGSL) form a helical membrane-spanning segment. His-198 is a chlorophyll a binding site. A quinone-binding positions include His-215 and 264–265 (SF). His-215 serves as a coordination point for Fe cation. His-272 is a binding site for Fe cation. A helical membrane pass occupies residues 274 to 288 (FLALWPVVGIWFTAL). [CaMn4O5] cluster-binding residues include His-332, Glu-333, Asp-342, and Ala-344. Positions 345–360 (SGEVMPVALTAPSINA) are excised as a propeptide.

Belongs to the reaction center PufL/M/PsbA/D family. As to quaternary structure, PSII is composed of 1 copy each of membrane proteins PsbA, PsbB, PsbC, PsbD, PsbE, PsbF, PsbH, PsbI, PsbJ, PsbK, PsbL, PsbM, PsbT, PsbX, PsbY, PsbZ, Psb30/Ycf12, at least 3 peripheral proteins of the oxygen-evolving complex and a large number of cofactors. It forms dimeric complexes. The D1/D2 heterodimer binds P680, chlorophylls that are the primary electron donor of PSII, and subsequent electron acceptors. It shares a non-heme iron and each subunit binds pheophytin, quinone, additional chlorophylls, carotenoids and lipids. D1 provides most of the ligands for the Mn4-Ca-O5 cluster of the oxygen-evolving complex (OEC). There is also a Cl(-1) ion associated with D1 and D2, which is required for oxygen evolution. The PSII complex binds additional chlorophylls, carotenoids and specific lipids. is required as a cofactor. Post-translationally, tyr-161 forms a radical intermediate that is referred to as redox-active TyrZ, YZ or Y-Z. C-terminally processed by CTPA; processing is essential to allow assembly of the oxygen-evolving complex and thus photosynthetic growth.

The protein localises to the plastid. The protein resides in the cyanelle thylakoid membrane. It catalyses the reaction 2 a plastoquinone + 4 hnu + 2 H2O = 2 a plastoquinol + O2. Functionally, photosystem II (PSII) is a light-driven water:plastoquinone oxidoreductase that uses light energy to abstract electrons from H(2)O, generating O(2) and a proton gradient subsequently used for ATP formation. It consists of a core antenna complex that captures photons, and an electron transfer chain that converts photonic excitation into a charge separation. The D1/D2 (PsbA/PsbD) reaction center heterodimer binds P680, the primary electron donor of PSII as well as several subsequent electron acceptors. The chain is Photosystem II protein D1 from Cyanophora paradoxa.